We begin with the raw amino-acid sequence, 226 residues long: Acyl-homoserine-lactone synthase (226 aa).

Belongs to the autoinducer synthase family.

The enzyme catalyses a fatty acyl-[ACP] + S-adenosyl-L-methionine = an N-acyl-L-homoserine lactone + S-methyl-5'-thioadenosine + holo-[ACP] + H(+). Its function is as follows. Required for the synthesis of OHHL (N-(3-oxohexanoyl)-L-homoserine lactone), an autoinducer molecule. The polypeptide is Acyl-homoserine-lactone synthase (psyI) (Pseudomonas amygdali pv. tabaci (Pseudomonas syringae pv. tabaci)).